A 267-amino-acid polypeptide reads, in one-letter code: Transcription factor HES-1 (267 aa).

The segment at 1–45 (MPADLMEKNSSSPVAATPASMSNTPDKPKTASEHRKSSKPIMEKR) is disordered. The segment covering 8–25 (KNSSSPVAATPASMSNTP) has biased composition (polar residues). Residues 26–35 (DKPKTASEHR) are compositionally biased toward basic and acidic residues. A bHLH domain is found at 34–91 (HRKSSKPIMEKRRRARINESLGQLKTLILDALKKDSSRHSKLEKADILEMTVKHLRNL). The 34-residue stretch at 110 to 143 (YRAGFSECMNEVTRFLSTCEGVNTDVRTRLLGHL) folds into the Orange domain. The WRPW motif signature appears at 264-267 (WRPW).

In terms of assembly, transcription repression requires formation of a complex with a corepressor protein of the Groucho/TLE family. Interacts with the bHLH protein hes2, and binds DNA in the form of a heterodimer with the bHLH protein hey1/hrt1. Interacts with the bHLH protein hes6; this interaction may inhibit the transcriptional repressor activity.

It localises to the nucleus. Transcriptional repressor of a subset of early mesodermal genes including myod1 and t/bra. Binds DNA on N-box motifs: 5'-CACNAG-3'. Acts as a negative regulator of myogenesis, mediating Notch signaling to repress expression of myod1. In Xenopus tropicalis (Western clawed frog), this protein is Transcription factor HES-1.